Consider the following 252-residue polypeptide: MQLKPMEINPEMLNKVLTRLGVAGQWRFEDVLGLEEESLGSVPAPACALLLLFPLTAQRCFKLGREAASRFHHPDYPGRLFILLVSQHENFRKKQIEELKGQEVSPKVYFMKQTIGNSCGTIGLIHAVANNQDKLEFEDGSVLKQFLSETEKLSPEDRAKCFEKNEAIQAAHDAVAQEGQCRVDDKVNFHFILFNNVDGHLYELDGRMPFPVNHGTSSEDSLLQDAAKVCREFTEREQGEVRFSAVALCKAA.

The residue at position 1 (Met1) is an N-acetylmethionine. One can recognise a UCH catalytic domain in the interval 2–250; sequence QLKPMEINPE…VRFSAVALCK (249 aa). The segment at 5–10 is interaction with ubiquitin; that stretch reads PMEINP. Cys119 acts as the Nucleophile in catalysis. Ser154 carries the phosphoserine modification. Residue His190 is the Proton donor of the active site. Positions 240 to 245 are interaction with ubiquitin; that stretch reads EVRFSA. Residue Cys249 is the site of S-farnesyl cysteine attachment. Positions 250–252 are cleaved as a propeptide — removed in mature form; that stretch reads KAA.

The protein belongs to the peptidase C12 family. In terms of assembly, monomer. Homodimer. Interacts with COPS5 and SNCA. In terms of processing, O-glycosylated. As to expression, neurons and cells of the diffuse neuroendocrine system and their tumors.

The protein localises to the cytoplasm. Its subcellular location is the endoplasmic reticulum membrane. The enzyme catalyses Thiol-dependent hydrolysis of ester, thioester, amide, peptide and isopeptide bonds formed by the C-terminal Gly of ubiquitin (a 76-residue protein attached to proteins as an intracellular targeting signal).. Its function is as follows. Ubiquitin-protein hydrolase involved both in the processing of ubiquitin precursors and of ubiquitinated proteins. This enzyme is a thiol protease that recognizes and hydrolyzes a peptide bond at the C-terminal glycine of ubiquitin. Also binds to free monoubiquitin and may prevent its degradation in lysosomes. The homodimer may have ATP-independent ubiquitin ligase activity. This Bos taurus (Bovine) protein is Ubiquitin carboxyl-terminal hydrolase isozyme L1 (UCHL1).